A 399-amino-acid polypeptide reads, in one-letter code: PCI domain-containing protein 2 (399 aa).

A2 is modified (N-acetylalanine). S45 bears the Phosphoserine mark. In terms of domain architecture, PCI spans I210–P391.

It belongs to the CSN12 family. Component of the nuclear pore complex (NPC)-associated TREX-2 complex (transcription and export complex 2), composed of at least GANP, 2 copies of ENY2, PCID2, SEM1/DSS1, and either centrin CETN2 or centrin CETN3. The TREX-2 complex also associates with ALYREF/ALY and with the nucleoporin NUP153. Interacts with BRCA2. Interacts with SRCAP chromatin remodeling complex component ZNHIT1; the interaction results in inhibition of SRCAP complex activity, preventing the deposition of histone variant H2AZ1/H2A.Z to lymphoid fate regulator genes and restricting lymphoid lineage commitment. In terms of tissue distribution, highly expressed in bone marrow and haematopoietic progenitor cells but is almost undetectable in mature blood cells.

The protein resides in the cytoplasm. Its subcellular location is the nucleus. It is found in the nuclear pore complex. Required for B-cell survival through the regulation of the expression of cell-cycle checkpoint MAD2L1 protein during B cell differentiation. As a component of the TREX-2 complex, involved in the export of mRNAs to the cytoplasm through the nuclear pores. Binds and stabilizes BRCA2 and is thus involved in the control of R-loop-associated DNA damage and transcription-associated genomic instability. Blocks the activity of the SRCAP chromatin remodeling complex by interacting with SRCAP complex member ZNHIT1 and inhibiting its interaction with the complex. This prevents the deposition of histone variant H2AZ1/H2A.Z at the nucleosomes of key lymphoid fate regulator genes which suppresses their expression and restricts lymphoid lineage commitment. The protein is PCI domain-containing protein 2 (Pcid2) of Mus musculus (Mouse).